We begin with the raw amino-acid sequence, 40 residues long: Auxin-responsive endogenous peptide 1 (40 aa).

The helical transmembrane segment at 7 to 29 (LIYRLVVRCFLDYSICAPFYFYH) threads the bilayer.

Expressed in cotyledons, hypocotyls, roots, newly developing leaves and shoot apical meristem. Not detected in flowers, siliques or mature leaves.

It is found in the cytoplasm. Its subcellular location is the nucleus. It localises to the membrane. Its function is as follows. Negative regulator of the auxin response. The chain is Auxin-responsive endogenous peptide 1 from Arabidopsis thaliana (Mouse-ear cress).